A 345-amino-acid polypeptide reads, in one-letter code: 3-isopropylmalate dehydrogenase (345 aa).

74–87 (GPKWDGLPRKISPE) contributes to the NAD(+) binding site. Substrate is bound by residues R94, R104, R132, and D217. 3 residues coordinate Mg(2+): D217, D241, and D245. An NAD(+)-binding site is contributed by 274–286 (GSAPDIAGKGIAN).

The protein belongs to the isocitrate and isopropylmalate dehydrogenases family. LeuB type 1 subfamily. Homodimer. It depends on Mg(2+) as a cofactor. Mn(2+) serves as cofactor.

It localises to the cytoplasm. The enzyme catalyses (2R,3S)-3-isopropylmalate + NAD(+) = 4-methyl-2-oxopentanoate + CO2 + NADH. Its pathway is amino-acid biosynthesis; L-leucine biosynthesis; L-leucine from 3-methyl-2-oxobutanoate: step 3/4. Its function is as follows. Catalyzes the oxidation of 3-carboxy-2-hydroxy-4-methylpentanoate (3-isopropylmalate) to 3-carboxy-4-methyl-2-oxopentanoate. The product decarboxylates to 4-methyl-2 oxopentanoate. This Thermus thermophilus protein is 3-isopropylmalate dehydrogenase (leuB).